Consider the following 269-residue polypeptide: HTH-type transcriptional activator ArnR (269 aa).

The Cytoplasmic portion of the chain corresponds to 1–218 (MTKSLFDVLK…LLRLTNSYTL (218 aa)). Positions 39–62 (TTEISQTINTSRKSIIDAIRKLVD) form a DNA-binding region, H-T-H motif. A helical transmembrane segment spans residues 219-239 (EMANVKVMGFILISLPLLMYF). Residues 240-242 (RDQ) lie on the Extracellular side of the membrane. The chain crosses the membrane as a helical span at residues 243–263 (LGLIELPWLYAVIFLALLSVF). The Cytoplasmic portion of the chain corresponds to 264–269 (AQILSR).

The protein localises to the cell membrane. Functionally, involved in regulation of archaellar gene expression. Activates flaB transcription upon nutrient starvation by acting on the flaB promoter. This Sulfolobus acidocaldarius (strain ATCC 33909 / DSM 639 / JCM 8929 / NBRC 15157 / NCIMB 11770) protein is HTH-type transcriptional activator ArnR.